The primary structure comprises 252 residues: Large ribosomal subunit protein uL4 (252 aa).

It belongs to the universal ribosomal protein uL4 family. Part of the 50S ribosomal subunit.

One of the primary rRNA binding proteins, this protein initially binds near the 5'-end of the 23S rRNA. It is important during the early stages of 50S assembly. It makes multiple contacts with different domains of the 23S rRNA in the assembled 50S subunit and ribosome. In terms of biological role, forms part of the polypeptide exit tunnel. The chain is Large ribosomal subunit protein uL4 from Methanocaldococcus jannaschii (strain ATCC 43067 / DSM 2661 / JAL-1 / JCM 10045 / NBRC 100440) (Methanococcus jannaschii).